The following is a 489-amino-acid chain: MEDVVKALAKEVLSSADIEWNPPPGLLRRESSRYAGFTKTGSLAVVSSKARARRPDRTRVKYLRDEGFDRLVVDAWDYVVKASFYAVERCVGSGDRRFRILALVEKSYPHLALMSHLNFFPCGSTGSYDMVTIDVPSYSDVWMLVERRSNSTLVLGSDYYGELKMSFLRLAMNEARDRHLGVGLHAASKLYRVRVEGSMREVGVLVFGLSGTGKTTLTVEDHGLREPEYVRVMQDDIVILDWRGVAHGTEMNLYPKTDSVPELKKLEPAVLHPDAVLENVVVKSDGTPDFTDLSLTRNARALAIREAIPIASGSVDLMGTNVLVFLTRRPEMPPLARLTSPYQAVAYFMLGESFRTSAEAGKPEPVRVPGFDPFMLEPKWRSAYSLLDLIKSLNMNVYVMNTGHAKDRKIPPELSKHLLLSLVKENVDWKLDKHMGFEIAVRAGGVNLDGYNPEELYGESYVRVVDLLRRDRQEFLRSIPSVSFLADYV.

2 residues coordinate substrate: R53 and Y159. ATP is bound by residues H185, 208–216, D258, R300, 409–410, and S415; these read GLSGTGKTT and KI. Substrate is bound at residue R300.

Belongs to the phosphoenolpyruvate carboxykinase (ATP) family.

Its subcellular location is the cytoplasm. It carries out the reaction oxaloacetate + ATP = phosphoenolpyruvate + ADP + CO2. The protein operates within carbohydrate biosynthesis; gluconeogenesis. Its function is as follows. Involved in the gluconeogenesis. Catalyzes the conversion of oxaloacetate (OAA) to phosphoenolpyruvate (PEP) through direct phosphoryl transfer between the nucleoside triphosphate and OAA. This Aeropyrum pernix (strain ATCC 700893 / DSM 11879 / JCM 9820 / NBRC 100138 / K1) protein is Phosphoenolpyruvate carboxykinase (ATP).